A 344-amino-acid polypeptide reads, in one-letter code: Heat-inducible transcription repressor HrcA (344 aa).

Belongs to the HrcA family.

Its function is as follows. Negative regulator of class I heat shock genes (grpE-dnaK-dnaJ and groELS operons). Prevents heat-shock induction of these operons. The protein is Heat-inducible transcription repressor HrcA of Aster yellows witches'-broom phytoplasma (strain AYWB).